The chain runs to 108 residues: Large ribosomal subunit protein uL23 (108 aa).

The protein belongs to the universal ribosomal protein uL23 family. Part of the 50S ribosomal subunit. Contacts protein L29, and trigger factor when it is bound to the ribosome.

Functionally, one of the early assembly proteins it binds 23S rRNA. One of the proteins that surrounds the polypeptide exit tunnel on the outside of the ribosome. Forms the main docking site for trigger factor binding to the ribosome. In Mycoplasmoides gallisepticum (strain R(low / passage 15 / clone 2)) (Mycoplasma gallisepticum), this protein is Large ribosomal subunit protein uL23.